The following is a 311-amino-acid chain: Heme A synthase (311 aa).

At 1 to 6 the chain is on the cytoplasmic side; it reads MQRFIK. Residues 7–27 traverse the membrane as a helical segment; the sequence is WLAVITSLDLLVVLLGGALVT. The Extracellular portion of the chain corresponds to 28-62; the sequence is KTGSGQGCGKSWPLCNGEFVPSNLSMETIIELSHR. Residues cysteine 35 and cysteine 42 are joined by a disulfide bond. Residue glutamate 58 is part of the active site. Residue histidine 61 participates in heme o binding. Residues 63-83 form a helical membrane-spanning segment; that stretch reads LTSGSAGILVTLLCILSWKYY. Over 84–91 the chain is Cytoplasmic; that stretch reads KHVRETKT. A helical transmembrane segment spans residues 92–112; that stretch reads LAILSFVFLVAQALMGAAAVV. Topologically, residues 113 to 121 are extracellular; the sequence is WGQMPAVLA. A helical transmembrane segment spans residues 122-142; it reads IHFGISLISFASVILLTCLIF. Histidine 123 contributes to the heme o binding site. Residues 143-159 are Cytoplasmic-facing; that stretch reads EIDQKFDARSLIMDKKM. The helical transmembrane segment at 160–180 threads the bilayer; the sequence is KFHIYGVTIYSYIVVYTGALV. Over 181–211 the chain is Extracellular; that stretch reads RHERATLACPDFPLCSKSRPMPTQLHEWVQM. Cysteine 189 and cysteine 195 form a disulfide bridge. A helical transmembrane segment spans residues 212-232; sequence GHRVAAMLIFAWILYAMIIAI. Histidine 213 contributes to the heme b binding site. Over 233-243 the chain is Cytoplasmic; that stretch reads RHYKQQRVVYW. The chain crosses the membrane as a helical span at residues 244-264; it reads GWIISFILVTLQAIVGILVVF. Topologically, residues 265–271 are extracellular; that stretch reads TNASLAM. A helical membrane pass occupies residues 272 to 292; the sequence is ALLHSLFISCLFAVLCYLVMI. Histidine 275 is a heme b binding site. Topologically, residues 293–311 are cytoplasmic; it reads GTRSTVNAKETESTSKQTK.

This sequence belongs to the COX15/CtaA family. Type 1 subfamily. As to quaternary structure, interacts with CtaB. Requires heme b as cofactor.

It is found in the cell membrane. The enzyme catalyses Fe(II)-heme o + 2 A + H2O = Fe(II)-heme a + 2 AH2. The protein operates within porphyrin-containing compound metabolism; heme A biosynthesis; heme A from heme O: step 1/1. Functionally, catalyzes the conversion of heme O to heme A by two successive hydroxylations of the methyl group at C8. The first hydroxylation forms heme I, the second hydroxylation results in an unstable dihydroxymethyl group, which spontaneously dehydrates, resulting in the formyl group of heme A. The polypeptide is Heme A synthase (Bacillus mycoides (strain KBAB4) (Bacillus weihenstephanensis)).